The following is a 251-amino-acid chain: MTEPTVGSTDAELLAEPRLVVEPGVAARVSAVAGPVLQGMGYRLVRIRISGEAGCTVQIMAERPDGSMQIEDCEAISRALSPVLDVADPIDRAYRLEISSPGIDRPLVRRSDFERYAGHLVKVEMAVAHEGRKRFRGMIGAVEGDRVHLQRDDVKAGEERNVLLTMEDISEARLVLTDELIAESMRRGKAAAREMRRNLGLEPPAAPHAKISEKTTKNTKPKKKPAPTNTKKHRLAAERARRGEIEPDEGD.

The segment at 198-251 is disordered; that stretch reads NLGLEPPAAPHAKISEKTTKNTKPKKKPAPTNTKKHRLAAERARRGEIEPDEGD. Residues 217–234 are compositionally biased toward basic residues; sequence KNTKPKKKPAPTNTKKHR. Over residues 235-245 the composition is skewed to basic and acidic residues; sequence LAAERARRGEI.

Belongs to the RimP family.

The protein resides in the cytoplasm. Its function is as follows. Required for maturation of 30S ribosomal subunits. The chain is Ribosome maturation factor RimP from Bradyrhizobium diazoefficiens (strain JCM 10833 / BCRC 13528 / IAM 13628 / NBRC 14792 / USDA 110).